The sequence spans 723 residues: Protein Aster-A (723 aa).

Positions M1–S18 are enriched in low complexity. Residues M1–Q63 form a disordered region. Over residues P28–E38 the composition is skewed to pro residues. The region spanning E93–K160 is the GRAM domain. The tract at residues S257–L337 is disordered. Residues S265, S269, and S273 each carry the phosphoserine modification. Residues D302–T314 are compositionally biased toward polar residues. A VASt domain is found at S370–L541. S418 is subject to Phosphoserine. Residues L562–Q601 form a disordered region. Basic and acidic residues predominate over residues G566–P576. Over residues C579–S595 the composition is skewed to polar residues. The chain crosses the membrane as a helical span at residues A610–Y630.

The protein localises to the endoplasmic reticulum membrane. Its subcellular location is the cell membrane. It localises to the cytoplasmic vesicle. The protein resides in the autophagosome. In terms of biological role, cholesterol transporter that mediates non-vesicular transport of cholesterol from the plasma membrane (PM) to the endoplasmic reticulum (ER). Contains unique domains for binding cholesterol and the PM, thereby serving as a molecular bridge for the transfer of cholesterol from the PM to the ER. Plays a crucial role in cholesterol homeostasis and has the unique ability to localize to the PM based on the level of membrane cholesterol. In lipid-poor conditions localizes to the ER membrane and in response to excess cholesterol in the PM is recruited to the endoplasmic reticulum-plasma membrane contact sites (EPCS) which is mediated by the GRAM domain. At the EPCS, the sterol-binding VASt/ASTER domain binds to the cholesterol in the PM and facilitates its transfer from the PM to ER. May play a role in tumor progression. Plays a role in autophagy regulation and is required for biogenesis of the autophagosome. This function in autophagy requires its cholesterol-transfer activity. The protein is Protein Aster-A of Rattus norvegicus (Rat).